We begin with the raw amino-acid sequence, 200 residues long: Dephospho-CoA kinase (200 aa).

The 198-residue stretch at 3–200 (IIGLTGGIGS…LWQRFATQVE (198 aa)) folds into the DPCK domain. An ATP-binding site is contributed by 11-16 (GSGKST).

This sequence belongs to the CoaE family.

The protein localises to the cytoplasm. The catalysed reaction is 3'-dephospho-CoA + ATP = ADP + CoA + H(+). Its pathway is cofactor biosynthesis; coenzyme A biosynthesis; CoA from (R)-pantothenate: step 5/5. Its function is as follows. Catalyzes the phosphorylation of the 3'-hydroxyl group of dephosphocoenzyme A to form coenzyme A. This Corynebacterium diphtheriae (strain ATCC 700971 / NCTC 13129 / Biotype gravis) protein is Dephospho-CoA kinase.